Consider the following 113-residue polypeptide: Cell cycle protein GpsB (113 aa).

Residues 36–68 (LDMVIKDYSTFTQEIEALQAENIRLVQELDNAP) adopt a coiled-coil conformation.

It belongs to the GpsB family. Forms polymers through the coiled coil domains. Interacts with PBP1, MreC and EzrA.

Its subcellular location is the cytoplasm. Divisome component that associates with the complex late in its assembly, after the Z-ring is formed, and is dependent on DivIC and PBP2B for its recruitment to the divisome. Together with EzrA, is a key component of the system that regulates PBP1 localization during cell cycle progression. Its main role could be the removal of PBP1 from the cell pole after pole maturation is completed. Also contributes to the recruitment of PBP1 to the division complex. Not essential for septum formation. The polypeptide is Cell cycle protein GpsB (Listeria welshimeri serovar 6b (strain ATCC 35897 / DSM 20650 / CCUG 15529 / CIP 8149 / NCTC 11857 / SLCC 5334 / V8)).